We begin with the raw amino-acid sequence, 253 residues long: Toxin PezT (253 aa).

ATP is bound at residue 39-46 (GQSGAGKT). The active-site Proton acceptor is the Asp66.

The protein belongs to the zeta toxin family. In terms of assembly, forms a PezA(2)PezT(2) heterotetramer. The heterotetramer is much more stable than either of the proteins alone, and a specific mechanism may be necessary to liberate the toxin.

The catalysed reaction is UDP-N-acetyl-alpha-D-glucosamine + ATP = UDP-N-acetyl-alpha-D-glucosamine 3'-phosphate + ADP + H(+). Toxic component of a type II toxin-antitoxin (TA) system. Phosphorylates UDP-N-acetyl-D-glucosamine (UNAG) on the 3'-hydroxyl group of the N-acetyl-D-glucosamine moiety, yielding UNAG-3P. UNAG-3P inhibits MurA, the first committed step in cell wall synthesis, which is then blocked. Upon expression in E.coli results in decreased cell growth and viability, followed 3 hours later by growth restoration; the toxic effect and phosphorylation of UNAG are neutralized by coexpression with cognate antitoxin PezA. A mutant lacking the last 11 residues is stably maintained in E.coli, unlike the wild-type which undergoes spontaneous mutation. Expression of the deletion mutant in rapidly growing liquid cultures leads to cell bulging, permeabilization and massive lysis by 1 hour. Cells that survive are not able to undergo cytokinesis. Expression in slowly growing cells leads to bulging but not lysis. Functionally, acts as a corepressor of its own operon with PezA; it is not clear if it binds DNA alone. The chain is Toxin PezT (pezT) from Streptococcus pneumoniae serotype 4 (strain ATCC BAA-334 / TIGR4).